The sequence spans 1059 residues: IQ motif-containing protein H (1059 aa).

A coiled-coil region spans residues 6–35 (KNKDEVGNILVKVQDDLRQLKKNIVQFTVQ). The tract at residues 245–267 (MESAESRLLRAPPPSAASASSDN) is disordered. Residues 401-430 (HQAAAVRIQTCWRRYSARTAYLIRLRSKWA) enclose the IQ domain.

The chain is IQ motif-containing protein H (iqch) from Danio rerio (Zebrafish).